Consider the following 520-residue polypeptide: Nuclear GTP-binding protein NUG1 (520 aa).

2 stretches are compositionally biased toward basic residues: residues 1 to 13 (MRVR…RTST) and 21 to 34 (KKAS…KKMA). The segment at 1–53 (MRVRKRQSRRTSTKLKEGIKKKASAHRKKEKKMAKKDVTWRSRSKKDPGIPSN) is disordered. The span at 35-48 (KKDVTWRSRSKKDP) shows a compositional bias: basic and acidic residues. Positions 165 to 343 (YDKIFKSVID…ILDSPGICFP (179 aa)) constitute a CP-type G domain. GTP contacts are provided by residues 213–216 (NKVD), 287–294 (GYPNVGKS), and 336–339 (DSPG). Residue Ser337 is modified to Phosphoserine.

It belongs to the TRAFAC class YlqF/YawG GTPase family.

It is found in the nucleus. GTPase required for 60S ribosomal subunit export to the cytoplasm. This Saccharomyces cerevisiae (strain ATCC 204508 / S288c) (Baker's yeast) protein is Nuclear GTP-binding protein NUG1 (NUG1).